Here is a 106-residue protein sequence, read N- to C-terminus: MIAPAVLRALRKNKTLRYGVPMLLLVVGGSFGLREFSQIRYDAVTIKIDPELEKKLKVNKITLESEYEKIKDSTFENWKNIRGPRPWEDPQLLQGRNPETLKPKTT.

Topologically, residues 1–15 (MIAPAVLRALRKNKT) are mitochondrial matrix. A helical transmembrane segment spans residues 16–33 (LRYGVPMLLLVVGGSFGL). The Mitochondrial intermembrane portion of the chain corresponds to 34-106 (REFSQIRYDA…NPETLKPKTT (73 aa)). Residues 81–106 (IRGPRPWEDPQLLQGRNPETLKPKTT) are disordered.

The protein belongs to the COX16 family. As to quaternary structure, associates with the MITRAC complex. Interacts with MT-CO2/COX; specifically interacts with newly synthesized MT-CO2/COX. Interacts with SCO1, SCO2 and COA6.

It is found in the mitochondrion inner membrane. Required for the assembly of the mitochondrial respiratory chain complex IV (CIV), also known as cytochrome c oxidase. Promotes the insertion of copper into the active site of cytochrome c oxidase subunit II (MT-CO2/COX2). Interacts specifically with newly synthesized MT-CO2/COX and its copper center-forming metallochaperones SCO1, SCO2 and COA6. Probably facilitates MT-CO2/COX2 association with the MITRAC assembly intermediate containing MT-CO1/COX1, thereby participating in merging the MT-CO1/COX1 and MT-CO2/COX2 assembly lines. In Mus musculus (Mouse), this protein is Cytochrome c oxidase assembly protein COX16 homolog, mitochondrial.